A 202-amino-acid chain; its full sequence is LexA repressor (202 aa).

The segment at residues 28-47 (IREIGDQFGITAKGAYDHLK) is a DNA-binding region (H-T-H motif). Active-site for autocatalytic cleavage activity residues include Ser-126 and Lys-163.

Belongs to the peptidase S24 family. Homodimer.

It catalyses the reaction Hydrolysis of Ala-|-Gly bond in repressor LexA.. In terms of biological role, represses a number of genes involved in the response to DNA damage (SOS response), including recA and lexA. In the presence of single-stranded DNA, RecA interacts with LexA causing an autocatalytic cleavage which disrupts the DNA-binding part of LexA, leading to derepression of the SOS regulon and eventually DNA repair. This Leptospira biflexa serovar Patoc (strain Patoc 1 / Ames) protein is LexA repressor.